The primary structure comprises 24 residues: Skin secreted peptide 1 (24 aa).

In terms of tissue distribution, expressed by the skin glands.

The protein resides in the secreted. The sequence is that of Skin secreted peptide 1 from Ascaphus truei (Coastal tailed frog).